The chain runs to 1515 residues: EGEKHVGNVEVKAQYGKGKSVNLVVNGAAXPQEYDLDIKANAPQAENLKKLDLSLKTKNPSPDTYVVLVAIDADGRVYKSQSTVVYSEANPLIDVSYTAPNTPTSRLYVKGVKLSENQAKVEVKIVNIRDLSLDAVSEATLQKDNIILKVVANSEKLGLKNYKVDVATKDANNNGKRLEFQATNDNKNVLSGSTTFISKQENKKTIIEGSGTLKVKEEQKSANFKYIRTILTEGNEQGVETFLNLAVGESSYVAESRITNLEYKNSYVYCEEKKQCAHVELNSKVNIQKPGVVQHTVNVNFDLVKLGISPEFGLQITNEISEKKLPQYTLDLHAIKNDKKYHLNIYSHPELGKFPAGITVTLPHRVLALETRVEYPTNKGLPFPIKGEITIHPDKRKAQYKTAARFLVDVTGSDKQHALIADFGFSHPKLGKEALFKVRGNLKNSDNIIEIATSASVSCHPIFGADRESKFVLQVSPSSFKLLLDTPIVKVIELEGTAVVKENLQQGDLKFCLLQGKPVAVRALIKDYQYYEFTTDESDRKLSVIGHLDPEKRVDISADLVLSGEKKNIAHGALFLKDNLVKSEYGASKDNFDYFVTALKNDLTNLEARVKQLGEEINSDFKDILKRAQPKIQELEKAYKEDLEKIYQEVANDETLKNSQVINEVAQFLAKIIDDIVHAFKPLVDKVYNVIVETTKKIEEIYEKEIAPQIKSLYETVASIVKEFFDGLLDIVAHYAALITDFYEKHKPELEELTNTITEIFKDLTRIIVIQLKELKATVGQALEAIITTIKETQNSVVTALQAKYEELGVPESVLNAILEAHNAIRALLPTEETKNFADAVYTYVSKKLRSEKFDEQAQLRVVYEKFTVALQSLIQFLRGQFNQFGIPSLFNIESIPFITGPGQLSYTPTGVGASLSLVNQILRGDIPDPLSLIQAYRPRSLDPFDEIPAKLRGVVVNGQHIFTFDGRHLTFPGNCRYVLAHDYVDRNFTLVLQLQNGKPKSLILEDKSGTTVELKNNGQVAVNGASHGYPVEEKDVYAFRRPDGVLGIGSQYGALAYCSAKLEVCYFEINGFYLGKLRGLLGDGNNEAYDDFRLPNGKISTSESEFGNSYRLASSCPQAKCPEHSHHQQHAALPPACEQVFGGTSTLRPLSLVLDVAPFRQACIHAVAGNAENALREACSLGAGYVALGLGTLLPAVLPPACVRCTDAGGSKNIGDTYEVKLPNKQADILVVIETTKSNEKKDKDLVVPLVSQVVDTTRNLVVPWNLKSKHIAGIKVYLIGVTSRFPYPIVYDTDLKLKSAKVAFNDEHRYQYTPTIKTNCEKADSIQKTIANVIDEIRIVLGLSNINAGYLSAFETPLRPGALKHVITVNGDACKLEIGTPLQAISNIITYNQLGITHSLVASIPGLEVDGKSAPNVIGYTNDYALEFDGKKHAKEVQGAKVTLTEDNYCAELTEVTDGLVLSATNYNALGAGERKQFLLAAANAITQRILQESIVEECVCNYANPFVGRSAC.

One can recognise a VWFD domain in the interval 952-1118 (LRGVVVNGQH…NSYRLASSCP (167 aa)). C976 and C1117 are disulfide-bonded. N988 carries N-linked (GlcNAc...) asparagine glycosylation.

As to expression, hemolymph.

It is found in the secreted. Functionally, mediates transport for various types of lipids in hemolymph. Acts by forming lipoprotein particles that bind lipoproteins and lipids. Binds the A.niger cell wall component alpha-1,3-glucan, a fungal pathogen-associated molecular pattern (PAMP) that activates the host immune response. In Galleria mellonella (Greater wax moth), this protein is Apolipophorin.